Reading from the N-terminus, the 129-residue chain is Large-conductance mechanosensitive channel (129 aa).

Helical transmembrane passes span 8–28, 30–50, and 67–87; these read FIMR…AAFT, IVKS…AGAV, and GAVL…FLII.

It belongs to the MscL family. As to quaternary structure, homopentamer.

The protein resides in the cell membrane. Its function is as follows. Channel that opens in response to stretch forces in the membrane lipid bilayer. May participate in the regulation of osmotic pressure changes within the cell. In Oenococcus oeni (strain ATCC BAA-331 / PSU-1), this protein is Large-conductance mechanosensitive channel.